Consider the following 196-residue polypeptide: Peptidyl-tRNA hydrolase (196 aa).

Residue Y18 participates in tRNA binding. The Proton acceptor role is filled by H23. TRNA is bound by residues F69, N71, and N117.

This sequence belongs to the PTH family. As to quaternary structure, monomer.

It localises to the cytoplasm. It carries out the reaction an N-acyl-L-alpha-aminoacyl-tRNA + H2O = an N-acyl-L-amino acid + a tRNA + H(+). Its function is as follows. Hydrolyzes ribosome-free peptidyl-tRNAs (with 1 or more amino acids incorporated), which drop off the ribosome during protein synthesis, or as a result of ribosome stalling. Catalyzes the release of premature peptidyl moieties from peptidyl-tRNA molecules trapped in stalled 50S ribosomal subunits, and thus maintains levels of free tRNAs and 50S ribosomes. The sequence is that of Peptidyl-tRNA hydrolase from Vibrio cholerae serotype O1 (strain ATCC 39315 / El Tor Inaba N16961).